We begin with the raw amino-acid sequence, 185 residues long: Auxin-responsive protein IAA34 (185 aa).

The short motif at 63–67 (LGLSL) is the EAR-like (transcriptional repression) element. Positions 92 to 180 (WGYVKVTMDG…ERLRITRRND (89 aa)) constitute a PB1 domain.

It belongs to the Aux/IAA family. As to quaternary structure, homodimers and heterodimers.

Its subcellular location is the nucleus. Functionally, aux/IAA proteins are short-lived transcriptional factors that function as repressors of early auxin response genes at low auxin concentrations. Repression is thought to result from the interaction with auxin response factors (ARFs), proteins that bind to the auxin-responsive promoter element (AuxRE). Formation of heterodimers with ARF proteins may alter their ability to modulate early auxin response genes expression. The chain is Auxin-responsive protein IAA34 (IAA34) from Arabidopsis thaliana (Mouse-ear cress).